We begin with the raw amino-acid sequence, 541 residues long: Membrane protein insertase YidC (541 aa).

5 helical membrane-spanning segments follow: residues L7–H27, Q340–V360, L415–L435, L453–I473, and P494–V514.

The protein belongs to the OXA1/ALB3/YidC family. Type 1 subfamily. As to quaternary structure, interacts with the Sec translocase complex via SecD. Specifically interacts with transmembrane segments of nascent integral membrane proteins during membrane integration.

Its subcellular location is the cell inner membrane. Its function is as follows. Required for the insertion and/or proper folding and/or complex formation of integral membrane proteins into the membrane. Involved in integration of membrane proteins that insert both dependently and independently of the Sec translocase complex, as well as at least some lipoproteins. Aids folding of multispanning membrane proteins. The polypeptide is Membrane protein insertase YidC (Edwardsiella ictaluri (strain 93-146)).